Reading from the N-terminus, the 653-residue chain is Fidgetin-like protein 2 (653 aa).

Disordered regions lie at residues M1–P36, A86–L129, and Y216–P240. A compositionally biased stretch (polar residues) spans P10–S27. Residues E97–P107 are compositionally biased toward pro residues. The segment covering K119–L129 has biased composition (gly residues). The span at L219–P240 shows a compositional bias: pro residues. ATP-binding positions include A395 and G435–L440.

This sequence belongs to the AAA ATPase family. The cofactor is Mg(2+).

It is found in the cytoplasm. The protein resides in the cell cortex. It catalyses the reaction ATP + H2O = ADP + phosphate + H(+). In terms of biological role, microtubule-severing enzyme that negatively regulates cell migration and wound healing. In migrating cells, targets dynamic microtubules (MTs) at the leading edge and severs them, thereby suppressing motility. Microtubule severing releases ARHGEF2 which activates RHOA, which in turn regulates focal ahesion turnover via focal adhesion kinase, as opposed to F-actin polymerization, to suppress cell motility. Negative regulator of axon regeneration that suppresses axonal growth by selectively severing dynamic MTs in the distal axon shaft and growth cone. Contributes to proper cell branching during endothelial and neuronal development. This Homo sapiens (Human) protein is Fidgetin-like protein 2.